A 678-amino-acid polypeptide reads, in one-letter code: Serine/threonine-protein kinase mph1 (678 aa).

Disordered regions lie at residues 39–93 (KNDT…NSAL) and 114–209 (LPST…SNSV). Composition is skewed to polar residues over residues 41 to 66 (DTFS…SSGA) and 114 to 125 (LPSTNASHSEVS). One can recognise a Protein kinase domain in the interval 316 to 607 (FIKLGVVGKG…LVHPFLNPLP (292 aa)). Residues 322–330 (VGKGGSSMV) and lysine 345 each bind ATP. Residue aspartate 442 is the Proton acceptor of the active site.

Belongs to the protein kinase superfamily. Ser/Thr protein kinase family.

The catalysed reaction is L-seryl-[protein] + ATP = O-phospho-L-seryl-[protein] + ADP + H(+). It catalyses the reaction L-threonyl-[protein] + ATP = O-phospho-L-threonyl-[protein] + ADP + H(+). The enzyme catalyses L-tyrosyl-[protein] + ATP = O-phospho-L-tyrosyl-[protein] + ADP + H(+). Involved in mitotic spindle assembly checkpoint signaling, a process that delays anaphase until chromosomes are bioriented on the spindle, and in the repair of incorrect mitotic kinetochore-spindle microtubule attachments. Phosphorylates spc7/knl1 on MELT motifs; phosphorylation is required for recruitment of the BUB1-BUB3 complex to kinetochores. The sequence is that of Serine/threonine-protein kinase mph1 from Schizosaccharomyces pombe (strain 972 / ATCC 24843) (Fission yeast).